Reading from the N-terminus, the 1959-residue chain is Myosin-9 (1959 aa).

The 51-residue stretch at 27-77 folds into the Myosin N-terminal SH3-like domain; the sequence is AAKKLVWVPSEKSGFEAASLKEEVGDEAIVELAENGKKVKVNKDDIQKMNP. The 696-residue stretch at 81–776 folds into the Myosin motor domain; sequence SKVEDMAELT…VLAHLEEERD (696 aa). 174-181 is a binding site for ATP; it reads GESGAGKT. The tract at residues 654-676 is actin-binding; sequence LAKLMATLRNTNPNFVRCIIPNH. The IQ domain occupies 779-808; the sequence is ITDVIIGFQACCRGYLARKAFAKRQQQLTA. The stretch at 837–1925 forms a coiled coil; that stretch reads LLQVSRQEEE…LKSKLRRGDL (1089 aa). 4 disordered regions span residues 1118-1168, 1694-1717, 1879-1917, and 1936-1959; these read EDLE…REQE, RAKR…SGKG, LEEA…SSLK, and KGTG…KATE. Basic and acidic residues-rich tracts occupy residues 1122–1148 and 1694–1704; these read SERA…KTEL and RAKRQAQQERD. Basic and acidic residues predominate over residues 1947–1959; that stretch reads DGKAEAGDAKATE.

The protein belongs to the TRAFAC class myosin-kinesin ATPase superfamily. Myosin family. In terms of assembly, myosin is a hexameric protein that consists of 2 heavy chain subunits (MHC), 2 alkali light chain subunits (MLC) and 2 regulatory light chain subunits (MLC-2). As to expression, expressed in fibroblasts, brain, lung, kidney, spleen, and skeletal, cardiac and smooth muscles.

It is found in the cytoplasm. The protein localises to the cytoskeleton. The protein resides in the cell cortex. Its subcellular location is the cytoplasmic vesicle. It localises to the secretory vesicle. It is found in the cortical granule. Its function is as follows. Cellular myosin that appears to play a role in cytokinesis, cell shape, and specialized functions such as secretion and capping. In Gallus gallus (Chicken), this protein is Myosin-9 (MYH9).